The primary structure comprises 387 residues: S-adenosylmethionine synthase (387 aa).

Position 19 (H19) interacts with ATP. D21 provides a ligand contact to Mg(2+). Position 47 (E47) interacts with K(+). Q103 serves as a coordination point for L-methionine. The interval 103–113 is flexible loop; it reads QSPDIAQGVEL. Residues 167–169, 233–234, D242, 248–249, A265, and K269 contribute to the ATP site; these read DMK, RF, and RK. Residue D242 coordinates L-methionine. Residue K273 participates in L-methionine binding.

It belongs to the AdoMet synthase family. As to quaternary structure, homotetramer; dimer of dimers. The cofactor is Mg(2+). Requires K(+) as cofactor.

It localises to the cytoplasm. The enzyme catalyses L-methionine + ATP + H2O = S-adenosyl-L-methionine + phosphate + diphosphate. Its pathway is amino-acid biosynthesis; S-adenosyl-L-methionine biosynthesis; S-adenosyl-L-methionine from L-methionine: step 1/1. Catalyzes the formation of S-adenosylmethionine (AdoMet) from methionine and ATP. The overall synthetic reaction is composed of two sequential steps, AdoMet formation and the subsequent tripolyphosphate hydrolysis which occurs prior to release of AdoMet from the enzyme. This chain is S-adenosylmethionine synthase, found in Mycoplasma mycoides subsp. mycoides SC (strain CCUG 32753 / NCTC 10114 / PG1).